We begin with the raw amino-acid sequence, 377 residues long: MSRGIIIIGSGFAARQLVKNIRKQDAHVPLTLIAADSMDEYNKPDLSHVISQSQRADDLTRQLAGEFAEQFNLRLFPHTWVADIDADAHVVKSQDKQWQYDKLVLATGAAALVPPIAGRELMLTLNSQQEYRACEIPLRDAQRVLIVGGGLIGSELAMDFCRAGKTVTLMDNAASLLASLMPPEVSSRLQHHLTDMGVHLLLKSQLQKLEKTEAGIRATLVSQHSIEVDAVIAATGLRPETALARRAGVVVNRGVCVDSYLQTSHPDIYAIGDCAEINGQVLPFLQPIQLSAMYLAKNLLGGNAPLKLPAMLVKVKTPELPLHLAGETQRRDLSWQITAESDGMIAKGMSGEGQLRAFVVSEDRMKEAFALLKTLSV.

It belongs to the FAD-dependent oxidoreductase family. It depends on FAD as a cofactor.

The protein resides in the cytoplasm. The catalysed reaction is 2 reduced [nitric oxide reductase rubredoxin domain] + NAD(+) + H(+) = 2 oxidized [nitric oxide reductase rubredoxin domain] + NADH. It functions in the pathway nitrogen metabolism; nitric oxide reduction. Its function is as follows. One of at least two accessory proteins for anaerobic nitric oxide (NO) reductase. Reduces the rubredoxin moiety of NO reductase. This chain is Nitric oxide reductase FlRd-NAD(+) reductase, found in Salmonella paratyphi C (strain RKS4594).